Reading from the N-terminus, the 170-residue chain is CASP-like protein 1F1 (170 aa).

Topologically, residues 1–16 are cytoplasmic; the sequence is MMGDNEGRRTPLLNLG. A helical transmembrane segment spans residues 17-37; that stretch reads VQVSMRVLIIGAAMASMWVMI. The Extracellular segment spans residues 38-62; it reads TNREVASVYGIAFEAKYSYSSAFRY. The chain crosses the membrane as a helical span at residues 63 to 83; that stretch reads LVYAQIAVCAATLFTLVWACL. At 84-88 the chain is on the cytoplasmic side; the sequence is AVRRR. A helical membrane pass occupies residues 89–109; it reads GLVFALFFFDLLTTLTAISAF. Residues 110 to 141 are Extracellular-facing; the sequence is SAAFAEGYVGKYGNKQAGWLPICGYVHVYCSR. Residues 142–162 form a helical membrane-spanning segment; sequence VTISLAMSFASFVLLFILTVL. At 163–170 the chain is on the cytoplasmic side; that stretch reads TASSARHY.

Belongs to the Casparian strip membrane proteins (CASP) family. Homodimer and heterodimers.

The protein localises to the cell membrane. The sequence is that of CASP-like protein 1F1 from Arabidopsis lyrata subsp. lyrata (Lyre-leaved rock-cress).